Here is a 549-residue protein sequence, read N- to C-terminus: Glucose-6-phosphate isomerase (549 aa).

Glu355 acts as the Proton donor in catalysis. Catalysis depends on residues His386 and Lys514.

Belongs to the GPI family.

The protein localises to the cytoplasm. It catalyses the reaction alpha-D-glucose 6-phosphate = beta-D-fructose 6-phosphate. It participates in carbohydrate biosynthesis; gluconeogenesis. The protein operates within carbohydrate degradation; glycolysis; D-glyceraldehyde 3-phosphate and glycerone phosphate from D-glucose: step 2/4. Its function is as follows. Catalyzes the reversible isomerization of glucose-6-phosphate to fructose-6-phosphate. This chain is Glucose-6-phosphate isomerase, found in Salmonella choleraesuis (strain SC-B67).